The primary structure comprises 321 residues: Chemotaxis protein CheV1 (321 aa).

The CheW-like domain maps to 19–177; it reads ELQLLCFRLG…IEKMLIDVFP (159 aa). Residues 198–319 enclose the Response regulatory domain; sequence CVLLADDSPS…IQRVVKQFLE (122 aa). Position 252 is a 4-aspartylphosphate (aspartate 252).

In terms of biological role, plays an essential role in chemotaxis signal transduction system in order to colonize the host stomach. May act as a phosphate sink to control the flow of phosphate to CheAY. In Helicobacter pylori (strain ATCC 700392 / 26695) (Campylobacter pylori), this protein is Chemotaxis protein CheV1.